Reading from the N-terminus, the 369-residue chain is Cystathionine gamma-synthase (369 aa).

Lysine 200 carries the N6-(pyridoxal phosphate)lysine modification.

This sequence belongs to the trans-sulfuration enzymes family. Homotetramer. Pyridoxal 5'-phosphate serves as cofactor.

It localises to the cytoplasm. The catalysed reaction is O-succinyl-L-homoserine + L-cysteine = L,L-cystathionine + succinate + H(+). In terms of biological role, catalyzes the formation of L-cystathionine from O-succinyl-L-homoserine (OSHS) and L-cysteine, via a gamma-replacement reaction. In the absence of thiol, catalyzes gamma-elimination to form 2-oxobutanoate, succinate and ammonia. In Haemophilus influenzae (strain ATCC 51907 / DSM 11121 / KW20 / Rd), this protein is Cystathionine gamma-synthase (metB).